Here is a 375-residue protein sequence, read N- to C-terminus: Erythronate-4-phosphate dehydrogenase (375 aa).

Substrate-binding residues include serine 45 and threonine 66. NAD(+)-binding positions include aspartate 146, threonine 175, 206 to 208, and aspartate 232; that span reads ASR. The active site involves arginine 208. The active site involves glutamate 237. Histidine 254 (proton donor) is an active-site residue. An NAD(+)-binding site is contributed by glycine 257. Tyrosine 258 is a substrate binding site.

It belongs to the D-isomer specific 2-hydroxyacid dehydrogenase family. PdxB subfamily. As to quaternary structure, homodimer.

The protein resides in the cytoplasm. It catalyses the reaction 4-phospho-D-erythronate + NAD(+) = (R)-3-hydroxy-2-oxo-4-phosphooxybutanoate + NADH + H(+). It participates in cofactor biosynthesis; pyridoxine 5'-phosphate biosynthesis; pyridoxine 5'-phosphate from D-erythrose 4-phosphate: step 2/5. Catalyzes the oxidation of erythronate-4-phosphate to 3-hydroxy-2-oxo-4-phosphonooxybutanoate. The chain is Erythronate-4-phosphate dehydrogenase from Proteus mirabilis (strain HI4320).